The chain runs to 94 residues: Elongation factor 1-beta (94 aa).

It belongs to the EF-1-beta/EF-1-delta family.

Promotes the exchange of GDP for GTP in EF-1-alpha/GDP, thus allowing the regeneration of EF-1-alpha/GTP that could then be used to form the ternary complex EF-1-alpha/GTP/AAtRNA. The polypeptide is Elongation factor 1-beta (Ignicoccus hospitalis (strain KIN4/I / DSM 18386 / JCM 14125)).